Reading from the N-terminus, the 471-residue chain is Argininosuccinate lyase (471 aa).

This sequence belongs to the lyase 1 family. Argininosuccinate lyase subfamily.

Its subcellular location is the cytoplasm. It carries out the reaction 2-(N(omega)-L-arginino)succinate = fumarate + L-arginine. It functions in the pathway amino-acid biosynthesis; L-arginine biosynthesis; L-arginine from L-ornithine and carbamoyl phosphate: step 3/3. The sequence is that of Argininosuccinate lyase from Cereibacter sphaeroides (strain ATCC 17023 / DSM 158 / JCM 6121 / CCUG 31486 / LMG 2827 / NBRC 12203 / NCIMB 8253 / ATH 2.4.1.) (Rhodobacter sphaeroides).